The following is a 508-amino-acid chain: Glutamyl-tRNA(Gln) amidotransferase subunit B, mitochondrial (508 aa).

Belongs to the GatB/GatE family. GatB subfamily. In terms of assembly, subunit of the heterotrimeric GatFAB amidotransferase (AdT) complex, composed of A, B and F subunits.

The protein resides in the mitochondrion. The enzyme catalyses L-glutamyl-tRNA(Gln) + L-glutamine + ATP + H2O = L-glutaminyl-tRNA(Gln) + L-glutamate + ADP + phosphate + H(+). Allows the formation of correctly charged Gln-tRNA(Gln) through the transamidation of misacylated Glu-tRNA(Gln) in the mitochondria. The reaction takes place in the presence of glutamine and ATP through an activated gamma-phospho-Glu-tRNA(Gln). In Scheffersomyces stipitis (strain ATCC 58785 / CBS 6054 / NBRC 10063 / NRRL Y-11545) (Yeast), this protein is Glutamyl-tRNA(Gln) amidotransferase subunit B, mitochondrial.